Reading from the N-terminus, the 968-residue chain is RNA polymerase-associated protein RapA (968 aa).

The Helicase ATP-binding domain occupies 164–334 (DVGRRHAPRV…FARLRLLDPN (171 aa)). 177–184 (DEVGLGKT) is a binding site for ATP. Residues 280 to 283 (DEAH) carry the DEAH box motif. The Helicase C-terminal domain maps to 490–662 (RVEWLMGYLT…YLASPDQTEG (173 aa)).

Belongs to the SNF2/RAD54 helicase family. RapA subfamily. Interacts with the RNAP. Has a higher affinity for the core RNAP than for the holoenzyme. Its ATPase activity is stimulated by binding to RNAP.

Its function is as follows. Transcription regulator that activates transcription by stimulating RNA polymerase (RNAP) recycling in case of stress conditions such as supercoiled DNA or high salt concentrations. Probably acts by releasing the RNAP, when it is trapped or immobilized on tightly supercoiled DNA. Does not activate transcription on linear DNA. Probably not involved in DNA repair. In Shigella flexneri serotype 5b (strain 8401), this protein is RNA polymerase-associated protein RapA.